Reading from the N-terminus, the 160-residue chain is Protein MGF 300-2R (160 aa).

Belongs to the asfivirus MGF 300 family.

Plays a role in virus cell tropism, and may be required for efficient virus replication in macrophages. The polypeptide is Protein MGF 300-2R (African swine fever virus (isolate Tick/Malawi/Lil 20-1/1983) (ASFV)).